Reading from the N-terminus, the 90-residue chain is Co-chaperonin GroES (90 aa).

It belongs to the GroES chaperonin family. In terms of assembly, heptamer of 7 subunits arranged in a ring. Interacts with the chaperonin GroEL.

It localises to the cytoplasm. Together with the chaperonin GroEL, plays an essential role in assisting protein folding. The GroEL-GroES system forms a nano-cage that allows encapsulation of the non-native substrate proteins and provides a physical environment optimized to promote and accelerate protein folding. GroES binds to the apical surface of the GroEL ring, thereby capping the opening of the GroEL channel. This chain is Co-chaperonin GroES, found in Fusobacterium nucleatum subsp. polymorphum (Fusobacterium polymorphum).